Here is a 526-residue protein sequence, read N- to C-terminus: Na(+)/H(+) antiporter NhaB (526 aa).

The next 12 helical transmembrane spans lie at 25-45, 52-72, 89-109, 130-164, 204-224, 242-262, 307-327, 350-370, 391-411, 448-468, 479-499, and 505-525; these read ILLFLLINPIAFYLDPFIAGW, IFTLAMALKCYPLQPGGLLAI, LVANIEVLLLLVFMVAGIYFM, LSLAFCLVSAFLSAFLDALTVIAVVISVATGFYAI, LMMHAAIGTALGGVCTLVGEP, IRMSPVTVPVFICGLLTCVLV, IALWLILGLAMHLAAVGLIGL, QEALPFTALLAVFFSVVAVII, LALFYLANGLLSMVSDNVFVG, VATPNGQAAFLFMLTSALAPL, MALPYTLVLGLVGFFSVEMLL, and WFYQAGWLVLDNVAPAALPVL.

The protein belongs to the NhaB Na(+)/H(+) (TC 2.A.34) antiporter family.

It is found in the cell inner membrane. It carries out the reaction 2 Na(+)(in) + 3 H(+)(out) = 2 Na(+)(out) + 3 H(+)(in). Its function is as follows. Na(+)/H(+) antiporter that extrudes sodium in exchange for external protons. The chain is Na(+)/H(+) antiporter NhaB from Aeromonas hydrophila subsp. hydrophila (strain ATCC 7966 / DSM 30187 / BCRC 13018 / CCUG 14551 / JCM 1027 / KCTC 2358 / NCIMB 9240 / NCTC 8049).